Reading from the N-terminus, the 274-residue chain is Large ribosomal subunit protein uL2 (274 aa).

Positions 221 to 256 (RGTAMNPVDHPHGGGEGRNFGKHPVTPWGVPTKGYK) are disordered.

This sequence belongs to the universal ribosomal protein uL2 family. As to quaternary structure, part of the 50S ribosomal subunit. Forms a bridge to the 30S subunit in the 70S ribosome.

In terms of biological role, one of the primary rRNA binding proteins. Required for association of the 30S and 50S subunits to form the 70S ribosome, for tRNA binding and peptide bond formation. It has been suggested to have peptidyltransferase activity; this is somewhat controversial. Makes several contacts with the 16S rRNA in the 70S ribosome. This chain is Large ribosomal subunit protein uL2, found in Hahella chejuensis (strain KCTC 2396).